Consider the following 283-residue polypeptide: Glutamate racemase (283 aa).

Substrate-binding positions include 7–8 (DS) and 39–40 (YG). C70 acts as the Proton donor/acceptor in catalysis. 71–72 (NT) is a substrate binding site. C206 serves as the catalytic Proton donor/acceptor. 207–208 (TH) is a substrate binding site.

It belongs to the aspartate/glutamate racemases family.

The catalysed reaction is L-glutamate = D-glutamate. The protein operates within cell wall biogenesis; peptidoglycan biosynthesis. In terms of biological role, provides the (R)-glutamate required for cell wall biosynthesis. This Caulobacter sp. (strain K31) protein is Glutamate racemase.